Consider the following 194-residue polypeptide: tRNA (mnm(5)s(2)U34)-methyltransferase (194 aa).

The S-adenosyl-L-methionine site is built by H33, D34, D52, Q54, S79, and H80.

This sequence belongs to the methyltransferase superfamily. MnmM family. In terms of assembly, homodimer.

It catalyses the reaction 5-aminomethyl-2-thiouridine(34) in tRNA + S-adenosyl-L-methionine = 5-methylaminomethyl-2-thiouridine(34) in tRNA + S-adenosyl-L-homocysteine + H(+). It participates in tRNA modification. In terms of biological role, involved in the biosynthesis of 5-methylaminomethyl-2-thiouridine (mnm(5)s(2)U) at the wobble position (U34) in tRNA. Catalyzes the transfer of a methyl group from S-adenosyl-L-methionine to nm(5)s(2)U34 to form mnm(5)s(2)U34. In Bacillus subtilis (strain 168), this protein is tRNA (mnm(5)s(2)U34)-methyltransferase.